Consider the following 142-residue polypeptide: Large ribosomal subunit protein uL11 (142 aa).

It belongs to the universal ribosomal protein uL11 family. In terms of assembly, part of the ribosomal stalk of the 50S ribosomal subunit. Interacts with L10 and the large rRNA to form the base of the stalk. L10 forms an elongated spine to which L12 dimers bind in a sequential fashion forming a multimeric L10(L12)X complex. Post-translationally, one or more lysine residues are methylated.

In terms of biological role, forms part of the ribosomal stalk which helps the ribosome interact with GTP-bound translation factors. The polypeptide is Large ribosomal subunit protein uL11 (Alcanivorax borkumensis (strain ATCC 700651 / DSM 11573 / NCIMB 13689 / SK2)).